Reading from the N-terminus, the 336-residue chain is Di/tripeptide transport system permease protein DppB (336 aa).

6 consecutive transmembrane segments (helical) span residues 10 to 30 (GLLI…IRLI), 102 to 122 (LSLA…VIAA), 145 to 165 (IFWW…WTPV), 198 to 218 (AVRH…AVIA), 257 to 277 (LIPV…GAVL), and 307 to 327 (ILLV…LYGL). Positions 96-325 (FPATLELSLA…LVNFVVDILY (230 aa)) constitute an ABC transmembrane type-1 domain.

It belongs to the binding-protein-dependent transport system permease family. OppBC subfamily. The complex is composed of two ATP-binding proteins (DppD and DppF), two transmembrane proteins (DppB and DppC) and a solute-binding protein (DppA1-A5). Five orthologous SBPs (DppA1-A5) are present in P.aeruginosa, which increases the substrate specificity of the DppBCDF transporter.

It is found in the cell inner membrane. In terms of biological role, part of the ABC transporter DppABCDF involved in the uptake of various di/tripeptides. Is also involved in the uptake of phaseolotoxin, a toxic tripeptide inhibiting the enzyme ornithine carbamoyltransferase. Responsible for the translocation of the substrate across the membrane. This chain is Di/tripeptide transport system permease protein DppB, found in Pseudomonas aeruginosa (strain UCBPP-PA14).